The primary structure comprises 339 residues: Anthranilate phosphoribosyltransferase (339 aa).

Residues G82, 85–86 (GD), T90, 92–95 (NIST), and 110–118 (KHGNRAVSS) each bind 5-phospho-alpha-D-ribose 1-diphosphate. G82 contacts anthranilate. A Mg(2+)-binding site is contributed by S94. The anthranilate site is built by N113 and R168. Mg(2+) is bound by residues D227 and E228.

This sequence belongs to the anthranilate phosphoribosyltransferase family. Homodimer. It depends on Mg(2+) as a cofactor.

The enzyme catalyses N-(5-phospho-beta-D-ribosyl)anthranilate + diphosphate = 5-phospho-alpha-D-ribose 1-diphosphate + anthranilate. Its pathway is amino-acid biosynthesis; L-tryptophan biosynthesis; L-tryptophan from chorismate: step 2/5. In terms of biological role, catalyzes the transfer of the phosphoribosyl group of 5-phosphorylribose-1-pyrophosphate (PRPP) to anthranilate to yield N-(5'-phosphoribosyl)-anthranilate (PRA). The protein is Anthranilate phosphoribosyltransferase of Clostridium beijerinckii (strain ATCC 51743 / NCIMB 8052) (Clostridium acetobutylicum).